The sequence spans 277 residues: Protein G1-like2 (277 aa).

Positions methionine 1 to glutamate 16 are enriched in gly residues. Disordered regions lie at residues methionine 1–arginine 28, arginine 141–phenylalanine 203, and histidine 225–glycine 245. The segment covering arginine 19–arginine 28 has biased composition (basic and acidic residues). Residues arginine 22–arginine 149 form the ALOG domain. A Nuclear localization signal motif is present at residues lysine 147–lysine 151. The span at proline 154 to alanine 177 shows a compositional bias: low complexity. Residues serine 178–threonine 187 show a composition bias toward pro residues.

This sequence belongs to the plant homeotic and developmental regulators ALOG protein family.

It localises to the nucleus. Probable transcription regulator that acts as a developmental regulator by promoting cell growth in response to light. The polypeptide is Protein G1-like2 (G1L2) (Oryza sativa subsp. japonica (Rice)).